The chain runs to 352 residues: MEVEKELKTFSEVWISAIAAACYCRFVPAVAPHGGALRLLLLLPVVLLFIFLPLRLSSFHLGGPTALYLVWLANFKLLLFAFHLGPLSNPSLSLLHFISTTLLPIKFRDDPSNDHEKNKRTLSFEWRKVVLFVAKLVFFAGILKIYEFRKDLPHFVISVLYCFHFYLGTEITLAASAVIARATLGLDLYPQFNEPYLATSLQDFWGRRWNLMVSDILGLTTYQPVRRVLSRWVRLRWEVAGAMLVAFTVSGLMHEVFFFYLTRARPSWEVTGFFVLHGVCTAVEMVVKKAVSGKVRLRREVSGALTVGFVMVTGGWLFLPQLVRHGVDLKTIDEYPVMFNYTQKKLMGLLGW.

Transmembrane regions (helical) follow at residues V13–H33, G34–L54, L67–L87, K128–F148, F155–A175, V239–F259, S267–V287, and G303–V323.

It belongs to the wax synthase family.

It localises to the microsome membrane. It catalyses the reaction a long chain fatty alcohol + a fatty acyl-CoA = a wax ester + CoA. Its function is as follows. Catalyzes the final step in the synthesis of long-chain linear esters (waxes). Has activity with both saturated and monounsaturated acyl-CoA ranging from 14 to 24 carbons in length, but C20:1 acyl-CoA is the preferred substrate. The chain is Long-chain-alcohol O-fatty-acyltransferase from Simmondsia chinensis (Jojoba).